Here is a 273-residue protein sequence, read N- to C-terminus: HTH-type transcriptional activator RhaS (273 aa).

One can recognise an HTH araC/xylS-type domain in the interval 174-272 (YQLLDWLQNN…SQSPRDLRSQ (99 aa)). DNA-binding regions (H-T-H motif) lie at residues 191 to 212 (PELADRFALPLRTLHRQLKNKT) and 239 to 262 (VTDIAYLCGFGDSNHFSTLFKREF).

Binds DNA as a dimer.

Its subcellular location is the cytoplasm. Functionally, activates expression of the rhaBAD and rhaT operons. The sequence is that of HTH-type transcriptional activator RhaS from Yersinia pseudotuberculosis serotype I (strain IP32953).